Consider the following 562-residue polypeptide: Arylsulfatase H (562 aa).

Residues aspartate 15, aspartate 16, and cysteine 55 each coordinate Ca(2+). The active-site Nucleophile is cysteine 55. The residue at position 55 (cysteine 55) is a 3-oxoalanine (Cys). Lysine 115 contributes to the substrate binding site. Histidine 117 is a catalytic residue. 2 consecutive transmembrane segments (helical) span residues 167-187 (LWISTAVLSLVPLLLLIPKYA) and 189-209 (WFVVPWKVILTFALLAFLFFI). Histidine 271 contacts substrate. Residues aspartate 323 and asparagine 324 each coordinate Ca(2+).

It belongs to the sulfatase family. Ca(2+) serves as cofactor. Post-translationally, the conversion to 3-oxoalanine (also known as C-formylglycine, FGly), of a serine or cysteine residue in prokaryotes and of a cysteine residue in eukaryotes, is critical for catalytic activity.

It localises to the membrane. This is Arylsulfatase H (ARSH) from Canis lupus familiaris (Dog).